A 425-amino-acid polypeptide reads, in one-letter code: CBS domain-containing protein CBSX6 (425 aa).

Positions 16-90 (GKPEMVEFYE…FLAKTECLQE (75 aa)) constitute a CBS 1 domain. Residues 159-172 (SENSSSSSGLSADS) show a composition bias toward low complexity. A disordered region spans residues 159-182 (SENSSSSSGLSADSTNRPTTSMTS). Residues 173–182 (TNRPTTSMTS) are compositionally biased toward polar residues. Helical transmembrane passes span 200–220 (IGVLGALAPLPLTSISTLGII) and 275–295 (YLAAAWALANLYAGQFVMGVE). The CBS 2 domain occupies 347–409 (MYRGRSAPLT…TAVTKQPSAF (63 aa)).

The protein localises to the vacuole membrane. The chain is CBS domain-containing protein CBSX6 (CBSX6) from Arabidopsis thaliana (Mouse-ear cress).